A 346-amino-acid chain; its full sequence is MVSSNFYKNLGPRKLMAIIDFLHDIIEPPKVHEDIVIHDIKILQEASSNDISFLSNHKYSEFLKTTKAAACIVPKNFTGEANPNTVLIRAENSYFAYGKLIDFFYAPIKSYHAKIMKSAIVADSATIGKNCYIGHNVVIEDDVIIGDDSIIESGSFIGRGVNIGKNARIEQHVSINYAIIGDDALILAGAKIGQEGFGFSTEKGVHHKIFHIGVVKIGNNVEIGSNTTIDRGSLQDTIIEDLCRIDNLVQIGHGVKIGKGSIIVAQAGIAGSSTIGKYCALGGQVGIAGHLNICDGVQVAAQGGVLQNIEACKIVGGSPAVPIMDWHRQSVIMKQLVKTSNSKLKK.

His253 acts as the Proton acceptor in catalysis.

The protein belongs to the transferase hexapeptide repeat family. LpxD subfamily. Homotrimer.

The enzyme catalyses a UDP-3-O-[(3R)-3-hydroxyacyl]-alpha-D-glucosamine + a (3R)-hydroxyacyl-[ACP] = a UDP-2-N,3-O-bis[(3R)-3-hydroxyacyl]-alpha-D-glucosamine + holo-[ACP] + H(+). It participates in bacterial outer membrane biogenesis; LPS lipid A biosynthesis. In terms of biological role, catalyzes the N-acylation of UDP-3-O-acylglucosamine using 3-hydroxyacyl-ACP as the acyl donor. Is involved in the biosynthesis of lipid A, a phosphorylated glycolipid that anchors the lipopolysaccharide to the outer membrane of the cell. This chain is UDP-3-O-acylglucosamine N-acyltransferase, found in Rickettsia akari (strain Hartford).